The sequence spans 204 residues: Imidazoleglycerol-phosphate dehydratase (204 aa).

This sequence belongs to the imidazoleglycerol-phosphate dehydratase family.

It localises to the cytoplasm. It carries out the reaction D-erythro-1-(imidazol-4-yl)glycerol 3-phosphate = 3-(imidazol-4-yl)-2-oxopropyl phosphate + H2O. It functions in the pathway amino-acid biosynthesis; L-histidine biosynthesis; L-histidine from 5-phospho-alpha-D-ribose 1-diphosphate: step 6/9. This is Imidazoleglycerol-phosphate dehydratase from Corynebacterium urealyticum (strain ATCC 43042 / DSM 7109).